The sequence spans 264 residues: Protein GrpE (264 aa).

A compositionally biased stretch (basic and acidic residues) spans 36–49 (KVQSKKVSSDHSSS). A disordered region spans residues 36–59 (KVQSKKVSSDHSSSEDNASSDINS). The segment covering 50-59 (EDNASSDINS) has biased composition (low complexity).

This sequence belongs to the GrpE family. Homodimer.

The protein localises to the cytoplasm. In terms of biological role, participates actively in the response to hyperosmotic and heat shock by preventing the aggregation of stress-denatured proteins, in association with DnaK and GrpE. It is the nucleotide exchange factor for DnaK and may function as a thermosensor. Unfolded proteins bind initially to DnaJ; upon interaction with the DnaJ-bound protein, DnaK hydrolyzes its bound ATP, resulting in the formation of a stable complex. GrpE releases ADP from DnaK; ATP binding to DnaK triggers the release of the substrate protein, thus completing the reaction cycle. Several rounds of ATP-dependent interactions between DnaJ, DnaK and GrpE are required for fully efficient folding. In Peanut witches'-broom phytoplasma, this protein is Protein GrpE.